The following is a 138-amino-acid chain: ATP synthase epsilon chain (138 aa).

It belongs to the ATPase epsilon chain family. F-type ATPases have 2 components, CF(1) - the catalytic core - and CF(0) - the membrane proton channel. CF(1) has five subunits: alpha(3), beta(3), gamma(1), delta(1), epsilon(1). CF(0) has three main subunits: a, b and c.

It is found in the cell membrane. Its function is as follows. Produces ATP from ADP in the presence of a proton gradient across the membrane. This chain is ATP synthase epsilon chain, found in Streptococcus uberis (strain ATCC BAA-854 / 0140J).